We begin with the raw amino-acid sequence, 174 residues long: Small ribosomal subunit protein uS5 (174 aa).

In terms of domain architecture, S5 DRBM spans 16–79; the sequence is FSELIVSVRR…NAARKNMIRV (64 aa).

This sequence belongs to the universal ribosomal protein uS5 family. In terms of assembly, part of the 30S ribosomal subunit. Contacts proteins S4 and S8.

With S4 and S12 plays an important role in translational accuracy. In terms of biological role, located at the back of the 30S subunit body where it stabilizes the conformation of the head with respect to the body. The sequence is that of Small ribosomal subunit protein uS5 from Ehrlichia ruminantium (strain Gardel).